We begin with the raw amino-acid sequence, 70 residues long: DNA gyrase inhibitor YacG (70 aa).

Zn(2+) is bound by residues Cys20, Cys23, Cys35, and Cys39.

The protein belongs to the DNA gyrase inhibitor YacG family. As to quaternary structure, interacts with GyrB. Requires Zn(2+) as cofactor.

In terms of biological role, inhibits all the catalytic activities of DNA gyrase by preventing its interaction with DNA. Acts by binding directly to the C-terminal domain of GyrB, which probably disrupts DNA binding by the gyrase. This is DNA gyrase inhibitor YacG from Rhizobium etli (strain CIAT 652).